The following is a 242-amino-acid chain: Probable transcriptional regulatory protein LBA0733 (242 aa).

The tract at residues 1–22 (MSGHSKWHNIQGRKNAQDAKRG) is disordered.

The protein belongs to the TACO1 family.

It localises to the cytoplasm. This Lactobacillus acidophilus (strain ATCC 700396 / NCK56 / N2 / NCFM) protein is Probable transcriptional regulatory protein LBA0733.